The sequence spans 212 residues: 3-demethoxyubiquinol 3-hydroxylase (212 aa).

Residues 21–42 (SRMSRPLPVPQESAVTEAAPEL) form a disordered region. Fe cation-binding residues include Glu-61, Glu-91, His-94, Glu-143, Glu-175, and His-178.

The protein belongs to the COQ7 family. It depends on Fe cation as a cofactor.

It is found in the cell membrane. The enzyme catalyses a 5-methoxy-2-methyl-3-(all-trans-polyprenyl)benzene-1,4-diol + AH2 + O2 = a 3-demethylubiquinol + A + H2O. The protein operates within cofactor biosynthesis; ubiquinone biosynthesis. Functionally, catalyzes the hydroxylation of 2-nonaprenyl-3-methyl-6-methoxy-1,4-benzoquinol during ubiquinone biosynthesis. This Paraburkholderia xenovorans (strain LB400) protein is 3-demethoxyubiquinol 3-hydroxylase.